We begin with the raw amino-acid sequence, 259 residues long: Virulence plasmid ParA family protein pGP5-D (259 aa).

9–16 (FKGGTGKT) contributes to the ATP binding site.

This sequence belongs to the ParA family.

The polypeptide is Virulence plasmid ParA family protein pGP5-D (Chlamydia psittaci (Chlamydophila psittaci)).